The primary structure comprises 150 residues: MEVILLTKVENLGNLGDKVRVRDGYARNYLVPQGKAKYATAENIAEFEARRAELEKAAAEALAVAEARRAKLEALEPVTIASKSGGEGKLFGSVGTHDIAEAVTAAGVEVEKREVRMPLGPIRQTGEYDIELHLHTDVNATVKVVVVAEQ.

Belongs to the bacterial ribosomal protein bL9 family.

In terms of biological role, binds to the 23S rRNA. This is Large ribosomal subunit protein bL9 from Thioalkalivibrio sulfidiphilus (strain HL-EbGR7).